We begin with the raw amino-acid sequence, 358 residues long: Aminomethyltransferase (358 aa).

The protein belongs to the GcvT family. In terms of assembly, the glycine cleavage system is composed of four proteins: P, T, L and H.

It carries out the reaction N(6)-[(R)-S(8)-aminomethyldihydrolipoyl]-L-lysyl-[protein] + (6S)-5,6,7,8-tetrahydrofolate = N(6)-[(R)-dihydrolipoyl]-L-lysyl-[protein] + (6R)-5,10-methylene-5,6,7,8-tetrahydrofolate + NH4(+). The glycine cleavage system catalyzes the degradation of glycine. This Francisella tularensis subsp. mediasiatica (strain FSC147) protein is Aminomethyltransferase.